We begin with the raw amino-acid sequence, 655 residues long: Golgi integral membrane protein 4 (655 aa).

The N-myristoyl glycine moiety is linked to residue Gly-2. Over 2-12 (GNGMCSRKQKR) the chain is Cytoplasmic. A helical; Signal-anchor for type II membrane protein membrane pass occupies residues 13 to 33 (IFQTLLLLTVVFGFLYGAMLY). Topologically, residues 34 to 655 (LELQTQLRKA…AEKSHRRAEM (622 aa)) are lumenal. The golgi targeting stretch occupies residues 38-107 (TQLRKAEAVA…ETLNKGRQDS (70 aa)). Residues 66–216 (EHRSRLEKSL…KQLKDTLNRI (151 aa)) are a coiled coil. The interval 80–175 (LEHKKAKEDF…QELSKLKETV (96 aa)) is endosome targeting. Positions 122-145 (KSQHEELRKQHSDLEEEHRKQGED) are disordered. Basic and acidic residues predominate over residues 123-145 (SQHEELRKQHSDLEEEHRKQGED). The segment at 176-220 (YNLREENRQLRKAHQDIHTQLQDVKTQVAEYKQLKDTLNRIPSFR) is golgi targeting. Asn-229 carries an N-linked (GlcNAc...) asparagine glycan. Disordered stretches follow at residues 256–275 (QPNH…SSMQ) and 285–655 (EQNQ…RAEM). 4 stretches are compositionally biased toward basic and acidic residues: residues 261–270 (AGPRRMEEKP), 290–307 (EPRE…RKAL), 319–328 (EHLEEEHDPS), and 348–360 (LDGH…EHST). Ser-328 is subject to Phosphoserine. The span at 361–370 (KAATNFQSPY) shows a compositional bias: polar residues. The span at 381–398 (ARRDEEAQRLREHQEALH) shows a compositional bias: basic and acidic residues. 2 stretches are compositionally biased toward low complexity: residues 399 to 423 (QQRL…MAQQ) and 433 to 442 (QQHQEQLRQQ). Over residues 468–508 (AYDRDNQRQDEAEGDPGNRQELREPGHQEGDPEVEADRAAV) the composition is skewed to basic and acidic residues. Ser-540 is subject to Phosphoserine. Over residues 567 to 589 (QQEDNVDEQYQDEGEEEVQEDLT) the composition is skewed to acidic residues. Position 576 is a phosphotyrosine (Tyr-576). Residue Thr-589 is modified to Phosphothreonine. The span at 590 to 620 (EEKKREMEHNVEETYGEHPDDKNNDGEEQGV) shows a compositional bias: basic and acidic residues. Tyr-633 bears the Phosphotyrosine mark. The span at 633–642 (YEEEEDEEDG) shows a compositional bias: acidic residues.

This sequence belongs to the GOLIM4 family. Post-translationally, phosphorylated by c-AMP-dependent kinases most probably in its lumenal part. O-glycosylated; modified by sialic acid residues. In terms of processing, N-glycosylated; N-glycans are of the complex type and modified by sialic acid residues. Expressed by spermatozoa (at protein level).

The protein resides in the golgi apparatus. Its subcellular location is the golgi stack membrane. The protein localises to the endosome membrane. It localises to the membrane. In terms of biological role, plays a role in endosome to Golgi protein trafficking; mediates protein transport along the late endosome-bypass pathway from the early endosome to the Golgi. The polypeptide is Golgi integral membrane protein 4 (Golim4) (Mus musculus (Mouse)).